Here is a 425-residue protein sequence, read N- to C-terminus: Serine--tRNA ligase (425 aa).

An L-serine-binding site is contributed by 231–233 (TAE). Residues 262–264 (RTE) and Val278 each bind ATP. Glu285 serves as a coordination point for L-serine. 349-352 (EVTS) lines the ATP pocket. Residue Thr384 coordinates L-serine.

The protein belongs to the class-II aminoacyl-tRNA synthetase family. Type-1 seryl-tRNA synthetase subfamily. As to quaternary structure, homodimer. The tRNA molecule binds across the dimer.

The protein localises to the cytoplasm. The enzyme catalyses tRNA(Ser) + L-serine + ATP = L-seryl-tRNA(Ser) + AMP + diphosphate + H(+). The catalysed reaction is tRNA(Sec) + L-serine + ATP = L-seryl-tRNA(Sec) + AMP + diphosphate + H(+). It functions in the pathway aminoacyl-tRNA biosynthesis; selenocysteinyl-tRNA(Sec) biosynthesis; L-seryl-tRNA(Sec) from L-serine and tRNA(Sec): step 1/1. Catalyzes the attachment of serine to tRNA(Ser). Is also able to aminoacylate tRNA(Sec) with serine, to form the misacylated tRNA L-seryl-tRNA(Sec), which will be further converted into selenocysteinyl-tRNA(Sec). This Dictyoglomus thermophilum (strain ATCC 35947 / DSM 3960 / H-6-12) protein is Serine--tRNA ligase.